The sequence spans 875 residues: GATOR2 complex protein MIOS (875 aa).

7 WD repeats span residues 58 to 100, 111 to 155, 182 to 221, 223 to 261, 265 to 306, 320 to 360, and 395 to 437; these read SDTP…NSKF, KHAR…TPDI, GQND…QKMF, NTKA…KPVL, EQPK…TPIG, PCDN…SLAW, and RLRA…KQYT. The C4-type zinc finger occupies 735–781; that stretch reads VSCNFCGKSISYSCSSVPHQGRGFSQYGVSGSPTKSKVTSCPGCRKP. Zn(2+)-binding residues include C737 and C740. A phosphoserine mark is found at S759 and S766. 11 residues coordinate Zn(2+): C775, C778, C788, C827, C830, H832, H835, H838, C849, C854, and C858. The RING-type; atypical zinc finger occupies 782–863; sequence LPRCALCLIN…CTCKCMQLDT (82 aa).

The protein belongs to the WD repeat mio family. Component of the GATOR2 subcomplex, composed of MIOS, SEC13, SEH1L, WDR24 and WDR59. The GATOR2 complex interacts with CASTOR1 and CASTOR2; the interaction is negatively regulated by arginine. CASTOR1 and CASTOR2 convey leucine availability via direct interaction with MIOS. The GATOR2 complex interacts with SESN1, SESN2 and SESN3; the interaction is negatively regulated by amino acids. Interacts with SAR1A and SAR1B; the interaction is direct, disrupted by leucine and mediates the interaction of SAR1A or SAR1B with the GATOR2 complex to negatively regulate the TORC1 signaling upon leucine deprivation. Widely expressed. In brain, expressed in neurons and glia (oligodendrocytes and astrocytes), with more abundance in neurons.

Its subcellular location is the lysosome membrane. Its activity is regulated as follows. The GATOR2 complex is negatively regulated by the upstream amino acid sensors CASTOR1 and SESN2, which sequester the GATOR2 complex in absence of amino acids. In the presence of abundant amino acids, GATOR2 is released from CASTOR1 and SESN2 and activated. Functionally, as a component of the GATOR2 complex, functions as an activator of the amino acid-sensing branch of the mTORC1 signaling pathway. The GATOR2 complex indirectly activates mTORC1 through the inhibition of the GATOR1 subcomplex. GATOR2 probably acts as an E3 ubiquitin-protein ligase toward GATOR1. In the presence of abundant amino acids, the GATOR2 complex mediates ubiquitination of the NPRL2 core component of the GATOR1 complex, leading to GATOR1 inactivation. In the absence of amino acids, GATOR2 is inhibited, activating the GATOR1 complex. Within the GATOR2 complex, MIOS is required to prevent autoubiquitination of WDR24, the catalytic subunit of the complex. The GATOR2 complex is required for brain myelination. The sequence is that of GATOR2 complex protein MIOS from Mus musculus (Mouse).